The primary structure comprises 267 residues: uncharacterized protein (267 aa).

The 197-residue stretch at 2–198 (LGANGAGKTT…FRNKFIVIEG (197 aa)) folds into the ABC transporter domain. 3–10 (GANGAGKT) serves as a coordination point for ATP.

Belongs to the ABC transporter superfamily.

This is an uncharacterized protein from Alkalihalophilus pseudofirmus (strain ATCC BAA-2126 / JCM 17055 / OF4) (Bacillus pseudofirmus).